The sequence spans 341 residues: MDTVRIAVVGAGVMGLSTAVCIFKLVPGCSITVISDKFTPETTSDVAAGMLIPPVYPDTPIHKQKQWFKDTFDHLFAIANSAEAKDAGVLLVSGWQIFQSAPTEEVPFWADVVLGFRKMTKNELKKFPQHVCGQAFTTLKCEGPTYLPWLEKRVKGSGGLVLTRRVEDLWELHPSFNIVVNCSGLGSKQLVGDMEIFPVRGQVLKVQAPWVKHFIRDGSGLTYIYPGIANVTLGGTRQKGDWNLSPNAEISKQILSRCCALEPSLRGACDIREKVGLRPSRPGVRLEKELLVQGSQRLPVVHNYGHGSGGIAMHWGTALEAARLVSECVQALRTPAPKSKL.

Residues aspartate 36, lysine 37, threonine 43, serine 44, methionine 50, glycine 307, and isoleucine 311 each coordinate FAD. The Microbody targeting signal motif lies at 339 to 341 (SKL).

This sequence belongs to the DAMOX/DASOX family. As to quaternary structure, homotetramer. Interacts with PEX5; the interaction is direct and required for localization of DDO to the peroxisome. FAD serves as cofactor. As to expression, expressed in epithelial cells of the renal proximal tubules (not detected in the glomeruli or renal distal tubules), liver, right atrium of heart, lung, chief cells of the gastric mucosa, choroid plexus, pia mater, brain stem, midbrain, pons, medulla oblongata, hypothalamus, hippocampus, cerebral cortex, cerebellum, ependyma, olfactory bulb and the pituitary, pineal, thyroid and adrenal glands (at protein level).

The protein localises to the peroxisome matrix. It is found in the cytoplasm. It localises to the cytosol. The enzyme catalyses D-aspartate + O2 + H2O = oxaloacetate + H2O2 + NH4(+). The catalysed reaction is D-glutamate + O2 + H2O = H2O2 + 2-oxoglutarate + NH4(+). Selectively catalyzes the oxidative deamination of acidic amino acids. Suppresses the level of D-aspartate in the brain, an amino acid that can act as an agonist for glutamate receptors. Protects the organism from the toxicity of D-amino acids. May also function in the intestine. In Sus scrofa (Pig), this protein is D-aspartate oxidase (DDO).